A 346-amino-acid chain; its full sequence is Anthranilate phosphoribosyltransferase (346 aa).

5-phospho-alpha-D-ribose 1-diphosphate contacts are provided by residues Gly-81, 84–85 (GD), 91–94 (NVST), 109–117 (KHGGRSVSS), and Ser-121. Gly-81 serves as a coordination point for anthranilate. Mg(2+) is bound at residue Ser-93. Arg-167 serves as a coordination point for anthranilate. 2 residues coordinate Mg(2+): Asp-226 and Glu-227.

It belongs to the anthranilate phosphoribosyltransferase family. As to quaternary structure, homodimer. The cofactor is Mg(2+).

The catalysed reaction is N-(5-phospho-beta-D-ribosyl)anthranilate + diphosphate = 5-phospho-alpha-D-ribose 1-diphosphate + anthranilate. Its pathway is amino-acid biosynthesis; L-tryptophan biosynthesis; L-tryptophan from chorismate: step 2/5. Its function is as follows. Catalyzes the transfer of the phosphoribosyl group of 5-phosphorylribose-1-pyrophosphate (PRPP) to anthranilate to yield N-(5'-phosphoribosyl)-anthranilate (PRA). The polypeptide is Anthranilate phosphoribosyltransferase (Marinomonas sp. (strain MWYL1)).